We begin with the raw amino-acid sequence, 174 residues long: UPF0340 protein SAHV_2098 (174 aa).

The protein belongs to the UPF0340 family.

In Staphylococcus aureus (strain Mu3 / ATCC 700698), this protein is UPF0340 protein SAHV_2098.